We begin with the raw amino-acid sequence, 156 residues long: MATTINTSNKNTVKLLDILKIIFENNKTNTISEETLLSLYYIFDQTIFASLELIDKELITKYVFQPSNRYFYVVEGRKGAKYMCLIQGDYCSCPSFNFSVLLKSDSVYCKHQISSILAEIISNVKVIEFDDSEYQSQILSIESLSFKTPTHKFQQK.

The segment at 82–120 adopts an SWIM-type zinc-finger fold; the sequence is YMCLIQGDYCSCPSFNFSVLLKSDSVYCKHQISSILAEI.

This sequence belongs to the SWS1 family.

It is found in the nucleus. May be involved in the homologous recombination repair (HRR) pathway of double-stranded DNA breaks arising during DNA replication or induced by DNA-damaging agents. The sequence is that of Zinc finger SWIM domain-containing protein 7 homolog (zswim7) from Dictyostelium discoideum (Social amoeba).